The following is a 274-amino-acid chain: tRNA-cytidine(32) 2-sulfurtransferase (274 aa).

The short motif at 40–45 (SGGKDS) is the PP-loop motif element. Cys-115, Cys-118, and Cys-206 together coordinate [4Fe-4S] cluster.

This sequence belongs to the TtcA family. In terms of assembly, homodimer. Mg(2+) is required as a cofactor. [4Fe-4S] cluster serves as cofactor.

The protein resides in the cytoplasm. It carries out the reaction cytidine(32) in tRNA + S-sulfanyl-L-cysteinyl-[cysteine desulfurase] + AH2 + ATP = 2-thiocytidine(32) in tRNA + L-cysteinyl-[cysteine desulfurase] + A + AMP + diphosphate + H(+). It functions in the pathway tRNA modification. In terms of biological role, catalyzes the ATP-dependent 2-thiolation of cytidine in position 32 of tRNA, to form 2-thiocytidine (s(2)C32). The sulfur atoms are provided by the cysteine/cysteine desulfurase (IscS) system. The sequence is that of tRNA-cytidine(32) 2-sulfurtransferase from Pseudomonas aeruginosa (strain LESB58).